The primary structure comprises 472 residues: Transmembrane protein 8B (472 aa).

A compositionally biased stretch (low complexity) spans 1–10; sequence MNMPQSLGTQ. The disordered stretch occupies residues 1–24; it reads MNMPQSLGTQPLPPEPPSLGTPIE. Over 1–233 the chain is Extracellular; that stretch reads MNMPQSLGTQ…ADALTYGFQL (233 aa). Residue asparagine 100 is glycosylated (N-linked (GlcNAc...) asparagine). The region spanning 182–221 is the EGF-like domain; the sequence is FLSPCVDDCGPYGQCKLLRTHNYLYAACECKAGWRGWGCT. 3 disulfide bridges follow: cysteine 186–cysteine 196, cysteine 190–cysteine 209, and cysteine 211–cysteine 220. A helical membrane pass occupies residues 234–254; it reads LSTLLLCLSNLMFLPPVVLAI. Residues 255–257 are Cytoplasmic-facing; sequence RSR. The helical transmembrane segment at 258–277 threads the bilayer; it reads YVLEAAVYTFTMFFSTFYHA. The Extracellular segment spans residues 278-292; sequence CDQPGIVVFCIMDYD. Residues 293–313 form a helical membrane-spanning segment; sequence VLQFCDFLGSLMSVWVTVIAM. Residues 314–315 lie on the Cytoplasmic side of the membrane; sequence AR. Residues 316–336 traverse the membrane as a helical segment; that stretch reads LQPVIKQVLYLLGAMLLSMAL. At 337–342 the chain is on the extracellular side; that stretch reads QLDRHG. The chain crosses the membrane as a helical span at residues 343-363; that stretch reads LWNLLGPSLFALGILATAWTV. The Cytoplasmic portion of the chain corresponds to 364–379; it reads RSVRRRHCYPPTWRRW. A helical transmembrane segment spans residues 380-400; it reads LFYLCPGSLIAGSAVLLYAFV. The Extracellular portion of the chain corresponds to 401–405; the sequence is ETRDN. The chain crosses the membrane as a helical span at residues 406–426; it reads YFYIHSIWHMLIAGSVGFLLP. At 427-472 the chain is on the cytoplasmic side; sequence PRAKTDRRVPSGARARGCGYQLCINEQEELGLVGPGGTTVSSICVS.

Belongs to the TMEM8 family. May interact with EZR. In terms of processing, N-glycosylated.

The protein resides in the cell membrane. Its subcellular location is the cytoplasm. It is found in the nucleus. It localises to the mitochondrion. The protein localises to the endoplasmic reticulum. In terms of biological role, may function as a regulator of the EGFR pathway. Probable tumor suppressor which may function in cell growth, proliferation and adhesion. This is Transmembrane protein 8B (Tmem8b) from Mus musculus (Mouse).